The chain runs to 92 residues: Small ribosomal subunit protein uS17 (92 aa).

It belongs to the universal ribosomal protein uS17 family. As to quaternary structure, part of the 30S ribosomal subunit.

Functionally, one of the primary rRNA binding proteins, it binds specifically to the 5'-end of 16S ribosomal RNA. The polypeptide is Small ribosomal subunit protein uS17 (Wigglesworthia glossinidia brevipalpis).